Reading from the N-terminus, the 453-residue chain is Acyl-coenzyme A thioesterase 2, mitochondrial (453 aa).

A mitochondrion-targeting transit peptide spans 1 to 42 (MVASSFAVLRASRLCQWGWKSWTQLSGPPPLSTGGRTTFART). At Lys-83 the chain carries N6-acetyllysine. Residues Ser-273, Asp-365, and His-399 each act as charge relay system in the active site. Position 447 is an N6-succinyllysine (Lys-447).

This sequence belongs to the C/M/P thioester hydrolase family. Monomer. The N-terminus is blocked. In terms of tissue distribution, constitutively expressed in heart and brown fat. Strongly induced in liver, and weakly in kidney, in peroxisome proliferator treated rat.

It is found in the mitochondrion matrix. The catalysed reaction is hexadecanoyl-CoA + H2O = hexadecanoate + CoA + H(+). The enzyme catalyses tetradecanoyl-CoA + H2O = tetradecanoate + CoA + H(+). It carries out the reaction octadecanoyl-CoA + H2O = octadecanoate + CoA + H(+). It catalyses the reaction eicosanoyl-CoA + H2O = eicosanoate + CoA + H(+). The catalysed reaction is decanoyl-CoA + H2O = decanoate + CoA + H(+). The enzyme catalyses dodecanoyl-CoA + H2O = dodecanoate + CoA + H(+). It carries out the reaction (9Z)-octadecenoyl-CoA + H2O = (9Z)-octadecenoate + CoA + H(+). It catalyses the reaction (9Z)-hexadecenoyl-CoA + H2O = (9Z)-hexadecenoate + CoA + H(+). The catalysed reaction is (9E)-octadecenoyl-CoA + H2O = (9E)-octadecenoate + CoA + H(+). The enzyme catalyses (9Z,12Z)-octadecadienoyl-CoA + H2O = (9Z,12Z)-octadecadienoate + CoA + H(+). It participates in lipid metabolism; fatty acid metabolism. In terms of biological role, catalyzes the hydrolysis of acyl-CoAs into free fatty acids and coenzyme A (CoASH), regulating their respective intracellular levels. Displays higher activity toward long chain acyl CoAs (C14-C20). The enzyme is involved in enhancing the hepatic fatty acid oxidation in mitochondria. The polypeptide is Acyl-coenzyme A thioesterase 2, mitochondrial (Acot2) (Rattus norvegicus (Rat)).